Reading from the N-terminus, the 208-residue chain is Octanoyltransferase (208 aa).

One can recognise a BPL/LPL catalytic domain in the interval 30–208 (GTASEAVFIL…ILKQEFYKIF (179 aa)). Residues 69 to 76 (RGGKFTYH), 142 to 144 (SIG), and 155 to 157 (GVA) contribute to the substrate site. Catalysis depends on cysteine 173, which acts as the Acyl-thioester intermediate.

The protein belongs to the LipB family.

The protein resides in the cytoplasm. It carries out the reaction octanoyl-[ACP] + L-lysyl-[protein] = N(6)-octanoyl-L-lysyl-[protein] + holo-[ACP] + H(+). Its pathway is protein modification; protein lipoylation via endogenous pathway; protein N(6)-(lipoyl)lysine from octanoyl-[acyl-carrier-protein]: step 1/2. In terms of biological role, catalyzes the transfer of endogenously produced octanoic acid from octanoyl-acyl-carrier-protein onto the lipoyl domains of lipoate-dependent enzymes. Lipoyl-ACP can also act as a substrate although octanoyl-ACP is likely to be the physiological substrate. In Orientia tsutsugamushi (strain Boryong) (Rickettsia tsutsugamushi), this protein is Octanoyltransferase.